Here is an 876-residue protein sequence, read N- to C-terminus: Phosphoenolpyruvate carboxylase (876 aa).

Active-site residues include histidine 138 and lysine 544.

This sequence belongs to the PEPCase type 1 family. Requires Mg(2+) as cofactor.

The enzyme catalyses oxaloacetate + phosphate = phosphoenolpyruvate + hydrogencarbonate. Functionally, forms oxaloacetate, a four-carbon dicarboxylic acid source for the tricarboxylic acid cycle. The protein is Phosphoenolpyruvate carboxylase of Marinomonas sp. (strain MWYL1).